The primary structure comprises 472 residues: Alanine--anticapsin ligase (472 aa).

Glu109 serves as a coordination point for Mg(2+). The ATP site is built by Lys138 and Lys178. The region spanning 142–355 (RAAFNRAGVK…MAQLLLDVLC (214 aa)) is the ATP-grasp domain. Leu182 serves as a coordination point for Mg(2+). ATP-binding positions include 184-185 (SS), 226-229 (EEFL), and Gln268. Substrate-binding positions include Glu273 and 309-311 (HTE). Glu311 and Glu324 together coordinate Mg(2+). Substrate is bound at residue 328 to 331 (RFAG).

Monomer or homodimer. Mg(2+) serves as cofactor.

The catalysed reaction is L-anticapsin + L-alanine + ATP = bacilysin + ADP + phosphate + H(+). It participates in antibiotic biosynthesis; bacilysin biosynthesis. Its function is as follows. Part of the bacABCDEFG operon responsible for the biosynthesis of bacilysin, an irreversible inactivator of the glutaminase domain of glucosamine synthetase. Catalyzes the formation of alpha-dipeptides from various L-amino acids in the presence of ATP. In vivo catalyzes the ligation of L-alanine and L-anticapsin (epoxycyclohexanonyl-Ala) to produce the final bacilysin antibiotic (L-Ala-L-4S-cyclohexenonyl-Ala dipeptide). In Bacillus subtilis, this protein is Alanine--anticapsin ligase.